The following is a 216-amino-acid chain: Maleylacetoacetate isomerase (216 aa).

At methionine 1 the chain carries N-acetylmethionine. One can recognise a GST N-terminal domain in the interval 4–87 (GKPILYSYFR…YLEETRPIPR (84 aa)). Glutathione-binding positions include 14-19 (SSCSWR) and glutamine 45. At lysine 57 the chain carries N6-succinyllysine. Glutathione-binding positions include valine 59, 71–72 (QS), glutamine 111, and 115–117 (NLS). In terms of domain architecture, GST C-terminal spans 92–212 (DPQKRAIVRM…HPRRQPDTPA (121 aa)). Threonine 136 carries the phosphothreonine modification. The residue at position 137 (serine 137) is a Phosphoserine. Lysine 177 is modified (N6-succinyllysine). A Phosphoserine modification is found at serine 181.

It belongs to the GST superfamily. Zeta family. In terms of assembly, homodimer. Glutathione is required as a cofactor. In terms of tissue distribution, expressed in liver, kidney, seminal glands and breast.

It localises to the cytoplasm. The catalysed reaction is 4-maleylacetoacetate = 4-fumarylacetoacetate. It carries out the reaction RX + glutathione = an S-substituted glutathione + a halide anion + H(+). It participates in amino-acid degradation; L-phenylalanine degradation; acetoacetate and fumarate from L-phenylalanine: step 5/6. Functionally, probable bifunctional enzyme showing minimal glutathione-conjugating activity with ethacrynic acid and 7-chloro-4-nitrobenz-2-oxa-1, 3-diazole and maleylacetoacetate isomerase activity. Also has low glutathione peroxidase activity with t-butyl and cumene hydroperoxides. Is able to catalyze the glutathione dependent oxygenation of dichloroacetic acid to glyoxylic acid. The chain is Maleylacetoacetate isomerase (Gstz1) from Mus musculus (Mouse).